A 166-amino-acid polypeptide reads, in one-letter code: Large ribosomal subunit protein uL10 (166 aa).

Belongs to the universal ribosomal protein uL10 family. As to quaternary structure, part of the ribosomal stalk of the 50S ribosomal subunit. The N-terminus interacts with L11 and the large rRNA to form the base of the stalk. The C-terminus forms an elongated spine to which L12 dimers bind in a sequential fashion forming a multimeric L10(L12)X complex.

Functionally, forms part of the ribosomal stalk, playing a central role in the interaction of the ribosome with GTP-bound translation factors. In Streptococcus uberis (strain ATCC BAA-854 / 0140J), this protein is Large ribosomal subunit protein uL10.